A 466-amino-acid polypeptide reads, in one-letter code: MSLNLSRLSLLSSPRISISTHAPRKGYVCCSMKSYRLSELSSSQVDSLKSRPRIDFSSIFATVNPIIDAVRSNGDNAVKEYTERFDKVQLNKVVEDMSELSVPELDSNVKEAFDVAYDNIYAFHLAQKSTEKSVENMKGVRCKRVSRSIGSVGLYVPGGTAVLPSTALMLAIPAQIAGCKTVVLATPPSKDGSICKEVLYCAKRAGVTHILKAGGAQAIAAMAWGTDSCPKVEKIFGPGNQYVTAAKMILQNSEAMVSIDMPAGPSEVLVIADEHASPVYIAADLLSQAEHGPDSQVVLVVVGDSVDLNAIEEEIAKQCKSLPRGEFASKALSHSFTVFARDMIEAISFSNLYAPEHLIINVKDAEKWEGLIENAGSVFIGPWTPESVGDYASGTNHVLPTYGYARMYSGVSLDSFLKFMTVQSLTEEGLRNLGPYVATMAEIEGLDAHKRAVTLRLKDIEAKQLA.

The N-terminal 30 residues, 1 to 30 (MSLNLSRLSLLSSPRISISTHAPRKGYVCC), are a transit peptide targeting the chloroplast. NAD(+)-binding residues include tyrosine 155, glutamine 217, and asparagine 240. The substrate site is built by serine 266, glutamine 288, and histidine 291. Glutamine 288 and histidine 291 together coordinate Zn(2+). Catalysis depends on proton acceptor residues glutamate 356 and histidine 357. Positions 357, 390, 444, and 449 each coordinate substrate. Aspartate 390 serves as a coordination point for Zn(2+). Residue histidine 449 coordinates Zn(2+).

Belongs to the histidinol dehydrogenase family. Zn(2+) serves as cofactor.

The protein resides in the plastid. The protein localises to the chloroplast. The enzyme catalyses L-histidinol + 2 NAD(+) + H2O = L-histidine + 2 NADH + 3 H(+). It participates in amino-acid biosynthesis; L-histidine biosynthesis; L-histidine from 5-phospho-alpha-D-ribose 1-diphosphate: step 9/9. Its function is as follows. Catalyzes the sequential NAD-dependent oxidations of L-histidinol to L-histidinaldehyde and then to L-histidine. The polypeptide is Histidinol dehydrogenase, chloroplastic (HISN8) (Arabidopsis thaliana (Mouse-ear cress)).